We begin with the raw amino-acid sequence, 364 residues long: UDP-N-acetylenolpyruvoylglucosamine reductase (364 aa).

Residues 30 to 196 enclose the FAD-binding PCMH-type domain; it reads LGGPATRLIT…LRVRFELEDA (167 aa). Residue Arg173 is part of the active site. Catalysis depends on Ser252, which acts as the Proton donor. Glu356 is an active-site residue.

This sequence belongs to the MurB family. FAD serves as cofactor.

The protein resides in the cytoplasm. The catalysed reaction is UDP-N-acetyl-alpha-D-muramate + NADP(+) = UDP-N-acetyl-3-O-(1-carboxyvinyl)-alpha-D-glucosamine + NADPH + H(+). It participates in cell wall biogenesis; peptidoglycan biosynthesis. Cell wall formation. This is UDP-N-acetylenolpyruvoylglucosamine reductase from Streptomyces avermitilis (strain ATCC 31267 / DSM 46492 / JCM 5070 / NBRC 14893 / NCIMB 12804 / NRRL 8165 / MA-4680).